Here is a 206-residue protein sequence, read N- to C-terminus: MRRTLVLVRHGQSEWNIKNLFTGWKDPDLTEKGRTEAITAGKNLKKAGLKFDIAYTSALQRAQKTAQHILEQMAQPDLQLIKNSALNERDYGDLSGLNKDDARQRWGQEQVHIWRRSYTIAPPNGESLRDTGARVWPYYFHHIQPHILRSQTVLIVAHGNSLRALIMVLEGLSSEEIVLQELATGVPIIYEFNADSTILSKKIIQS.

Substrate contacts are provided by residues 9–16, 22–23, arginine 61, 88–91, lysine 99, 115–116, and 159–160; these read RHGQSEWN, TG, ERDY, RR, and GN. Histidine 10 serves as the catalytic Tele-phosphohistidine intermediate. Glutamate 88 serves as the catalytic Proton donor/acceptor.

This sequence belongs to the phosphoglycerate mutase family. BPG-dependent PGAM subfamily. In terms of assembly, homodimer.

The enzyme catalyses (2R)-2-phosphoglycerate = (2R)-3-phosphoglycerate. The protein operates within carbohydrate degradation; glycolysis; pyruvate from D-glyceraldehyde 3-phosphate: step 3/5. In terms of biological role, catalyzes the interconversion of 2-phosphoglycerate and 3-phosphoglycerate. This Bartonella bacilliformis (strain ATCC 35685 / KC583 / Herrer 020/F12,63) protein is 2,3-bisphosphoglycerate-dependent phosphoglycerate mutase.